The primary structure comprises 226 residues: Leucyl/phenylalanyl-tRNA--protein transferase (226 aa).

The protein belongs to the L/F-transferase family.

It localises to the cytoplasm. The enzyme catalyses N-terminal L-lysyl-[protein] + L-leucyl-tRNA(Leu) = N-terminal L-leucyl-L-lysyl-[protein] + tRNA(Leu) + H(+). It catalyses the reaction N-terminal L-arginyl-[protein] + L-leucyl-tRNA(Leu) = N-terminal L-leucyl-L-arginyl-[protein] + tRNA(Leu) + H(+). It carries out the reaction L-phenylalanyl-tRNA(Phe) + an N-terminal L-alpha-aminoacyl-[protein] = an N-terminal L-phenylalanyl-L-alpha-aminoacyl-[protein] + tRNA(Phe). In terms of biological role, functions in the N-end rule pathway of protein degradation where it conjugates Leu, Phe and, less efficiently, Met from aminoacyl-tRNAs to the N-termini of proteins containing an N-terminal arginine or lysine. The protein is Leucyl/phenylalanyl-tRNA--protein transferase of Bradyrhizobium sp. (strain ORS 278).